A 50-amino-acid polypeptide reads, in one-letter code: MGKKTVGVKKRLAKAYKQNRRAPVWITVKTKRSVFGSPKRRHWRRSKLKV.

The protein belongs to the eukaryotic ribosomal protein eL39 family.

The protein is Large ribosomal subunit protein eL39 (rpl39e) of Archaeoglobus fulgidus (strain ATCC 49558 / DSM 4304 / JCM 9628 / NBRC 100126 / VC-16).